The sequence spans 434 residues: MSFNTIIDWNSCTAEQQRQLLMRPAISASESITRTVNDILDNVKARGDDALREYSAKFDKTTVNALKVSAEEIAAASERLSDELKQAMAVAVKNIETFHTAQKLPPVDVETQPGVRCQQVTRPVASVGLYIPGGSAPLFSTVLMLATPARIAGCKKVVLCSPPPIADEILYAAQLCGVKDVFNVGGAQAIAALAFGTESVPKVDKIFGPGNAFVTEAKRQVSQRLDGAAIDMPAGPSEVLVIADSGATPDFVASDLLSQAEHGPDSQVILLTPDADMAHQVAEAVERQLAELPRAETARQALNASRLIVTKDLAQCVEISNQYGPEHLIIQTRNARDLVDGITSAGSVFLGDWSPESAGDYASGTNHVLPTYGYTATCSSLGLADFQKRMTVQELSKEGFSALASTIETLAAAERLTAHKNAVTLRVNALKEQA.

3 residues coordinate NAD(+): Tyr130, Gln188, and Asn211. 3 residues coordinate substrate: Ser237, Gln259, and His262. Residues Gln259 and His262 each coordinate Zn(2+). Residues Glu326 and His327 each act as proton acceptor in the active site. 4 residues coordinate substrate: His327, Asp360, Glu414, and His419. Residue Asp360 participates in Zn(2+) binding. His419 provides a ligand contact to Zn(2+).

It belongs to the histidinol dehydrogenase family. As to quaternary structure, homodimer. Requires Zn(2+) as cofactor.

It catalyses the reaction L-histidinol + 2 NAD(+) + H2O = L-histidine + 2 NADH + 3 H(+). The protein operates within amino-acid biosynthesis; L-histidine biosynthesis; L-histidine from 5-phospho-alpha-D-ribose 1-diphosphate: step 9/9. Functionally, catalyzes the sequential NAD-dependent oxidations of L-histidinol to L-histidinaldehyde and then to L-histidine. In Shigella sonnei (strain Ss046), this protein is Histidinol dehydrogenase.